Consider the following 286-residue polypeptide: Structure-specific endonuclease subunit SLX1 (286 aa).

Residues 15-98 (SFYGVYILKS…QHAYQTRHIN (84 aa)) enclose the GIY-YIG domain.

The protein belongs to the SLX1 family. In terms of assembly, forms a heterodimer with SLX4. It depends on a divalent metal cation as a cofactor.

Its subcellular location is the nucleus. In terms of biological role, catalytic subunit of the SLX1-SLX4 structure-specific endonuclease that resolves DNA secondary structures generated during DNA repair and recombination. Has endonuclease activity towards branched DNA substrates, introducing single-strand cuts in duplex DNA close to junctions with ss-DNA. In Candida dubliniensis (strain CD36 / ATCC MYA-646 / CBS 7987 / NCPF 3949 / NRRL Y-17841) (Yeast), this protein is Structure-specific endonuclease subunit SLX1.